Reading from the N-terminus, the 97-residue chain is Large ribosomal subunit protein bL25 (97 aa).

This sequence belongs to the bacterial ribosomal protein bL25 family. Part of the 50S ribosomal subunit; part of the 5S rRNA/L5/L18/L25 subcomplex. Contacts the 5S rRNA. Binds to the 5S rRNA independently of L5 and L18.

Functionally, this is one of the proteins that binds to the 5S RNA in the ribosome where it forms part of the central protuberance. The chain is Large ribosomal subunit protein bL25 from Blochmanniella pennsylvanica (strain BPEN).